We begin with the raw amino-acid sequence, 430 residues long: MTASLKAIDGSAELATLMHDLGRRARAAARVLALASPEQKNRALEAMERAIRAGADKILAANAEDVADANASGANSAFLDRLTLTPARVEAMAEGIAVVRGIPDPVGAVTESWQRPNGMTIERVRVPLGVVAVIYESRPNVTADAGVLCLKSGNAVILRGGSESFRSGRAIHDCLVQGLREAGLPEAAITLVPTRDRAAVGLLLGGLNGSVDVIVPRGGKSLVARVESEARVPVFAHLEGVNHVYIDRSADLDMAKSIVLNAKMRRTGVCGAAETLLIDRAAADTHLAPLVAMLIDAGCEVRGDAIVQHADARVKPATDQDWDTEYLDAVIAAKVVDDVDDAIVHIHDHGSHHTDAIVAEDAQTAAKFLGEVDSAIVLHNASTQFADGGEFGFGAEIGIATGKFHARGPVGAEQLTTFKYRIHGTGQTRP.

The protein belongs to the gamma-glutamyl phosphate reductase family.

The protein localises to the cytoplasm. The catalysed reaction is L-glutamate 5-semialdehyde + phosphate + NADP(+) = L-glutamyl 5-phosphate + NADPH + H(+). It participates in amino-acid biosynthesis; L-proline biosynthesis; L-glutamate 5-semialdehyde from L-glutamate: step 2/2. Catalyzes the NADPH-dependent reduction of L-glutamate 5-phosphate into L-glutamate 5-semialdehyde and phosphate. The product spontaneously undergoes cyclization to form 1-pyrroline-5-carboxylate. This is Gamma-glutamyl phosphate reductase from Rhodopseudomonas palustris (strain HaA2).